We begin with the raw amino-acid sequence, 196 residues long: Putative HTH-type transcriptional regulator in exeN 3'region (196 aa).

One can recognise an HTH luxR-type domain in the interval 120–185 (ASVGGDRLTR…ELFNLFLNHL (66 aa)). A DNA-binding region (H-T-H motif) is located at residues 144 to 163 (TEAIAAALGIGNGTVKNHRK).

The sequence is that of Putative HTH-type transcriptional regulator in exeN 3'region from Aeromonas salmonicida.